A 127-amino-acid chain; its full sequence is Large ribosomal subunit protein bL17 (127 aa).

This sequence belongs to the bacterial ribosomal protein bL17 family. In terms of assembly, part of the 50S ribosomal subunit. Contacts protein L32.

The sequence is that of Large ribosomal subunit protein bL17 from Escherichia fergusonii (strain ATCC 35469 / DSM 13698 / CCUG 18766 / IAM 14443 / JCM 21226 / LMG 7866 / NBRC 102419 / NCTC 12128 / CDC 0568-73).